The chain runs to 195 residues: HTH-type transcriptional regulator BetI (195 aa).

The HTH tetR-type domain occupies 8 to 68 (SIRRRQLIDA…ATMRDITSQL (61 aa)). Positions 31–50 (TIAQIARRAGVSTGIISHYF) form a DNA-binding region, H-T-H motif.

It participates in amine and polyamine biosynthesis; betaine biosynthesis via choline pathway [regulation]. Its function is as follows. Repressor involved in the biosynthesis of the osmoprotectant glycine betaine. It represses transcription of the choline transporter BetT and the genes of BetAB involved in the synthesis of glycine betaine. This chain is HTH-type transcriptional regulator BetI, found in Escherichia coli O17:K52:H18 (strain UMN026 / ExPEC).